The chain runs to 483 residues: Protein DETOXIFICATION 6 (483 aa).

The next 12 membrane-spanning stretches (helical) occupy residues Ala38–Val58, Gly69–Ala89, Phe113–Met133, Ile146–Val166, Ala187–Leu207, Gly211–Val231, Ala263–Leu283, Val292–Ala312, Val334–Ile354, Leu376–Val396, Ile405–Leu425, and Leu436–Ala456.

The protein belongs to the multi antimicrobial extrusion (MATE) (TC 2.A.66.1) family.

It localises to the membrane. This Arabidopsis thaliana (Mouse-ear cress) protein is Protein DETOXIFICATION 6.